Reading from the N-terminus, the 144-residue chain is DNA polymerase III subunit chi (144 aa).

The protein belongs to the DNA polymerase III chi/HolC chain family. In terms of assembly, DNA polymerase III contains a core (composed of alpha, epsilon and theta chains) that associates with a tau subunit. This core dimerizes to form the POLIII' complex. PolIII' associates with the gamma complex (composed of gamma, delta, delta', psi and chi chains) and with the beta chain to form the complete DNA polymerase III complex. Interacts directly with the psi subunit (holD). The only subunit of the DNA polymerase III holoenzyme known to interact with single-stranded DNA binding protein (SSB), interacts directly with DNA helicase YoaA.

The enzyme catalyses DNA(n) + a 2'-deoxyribonucleoside 5'-triphosphate = DNA(n+1) + diphosphate. In terms of biological role, part of the beta sliding clamp loading complex, which hydrolyzes ATP to load the beta clamp onto primed DNA to form the DNA replication pre-initiation complex. DNA polymerase III is a complex, multichain enzyme responsible for most of the replicative synthesis in bacteria. This DNA polymerase also exhibits 3' to 5' exonuclease activity. This subunit may stabilize YoaA and/or stimulate the helicase activity of YoaA. The chain is DNA polymerase III subunit chi (holC) from Haemophilus influenzae (strain ATCC 51907 / DSM 11121 / KW20 / Rd).